The primary structure comprises 190 residues: 6,7-dimethyl-8-ribityllumazine synthase (190 aa).

Residues W31, 65 to 67 (SFE), and 89 to 91 (CVI) contribute to the 5-amino-6-(D-ribitylamino)uracil site. 94–95 (ET) lines the (2S)-2-hydroxy-3-oxobutyl phosphate pocket. The active-site Proton donor is the H97. F122 is a binding site for 5-amino-6-(D-ribitylamino)uracil. R136 is a (2S)-2-hydroxy-3-oxobutyl phosphate binding site.

Belongs to the DMRL synthase family.

It catalyses the reaction (2S)-2-hydroxy-3-oxobutyl phosphate + 5-amino-6-(D-ribitylamino)uracil = 6,7-dimethyl-8-(1-D-ribityl)lumazine + phosphate + 2 H2O + H(+). It participates in cofactor biosynthesis; riboflavin biosynthesis; riboflavin from 2-hydroxy-3-oxobutyl phosphate and 5-amino-6-(D-ribitylamino)uracil: step 1/2. In terms of biological role, catalyzes the formation of 6,7-dimethyl-8-ribityllumazine by condensation of 5-amino-6-(D-ribitylamino)uracil with 3,4-dihydroxy-2-butanone 4-phosphate. This is the penultimate step in the biosynthesis of riboflavin. This Flavobacterium johnsoniae (strain ATCC 17061 / DSM 2064 / JCM 8514 / BCRC 14874 / CCUG 350202 / NBRC 14942 / NCIMB 11054 / UW101) (Cytophaga johnsonae) protein is 6,7-dimethyl-8-ribityllumazine synthase.